Here is a 603-residue protein sequence, read N- to C-terminus: MPVRQLPETVVNRIAAGEVVERPASVVKELVENAIDAGAGRIDIFTDGGGRRRIGITDDGGGMTKADLALAVDRHATSKLDDEDLLRIRTLGFRGEALPSIGAVAKLGITTRHGSEPHAWSLTVEGGRKSAIVPAALTQGTRVEVSDLFYATPARLKFLKTDRTEAEAIREVVRRLAMARPDIAFTLAGEERAPVTWTAALPGAAGQLTRLGDILGADFRCSAIAVRAERDGVTVEGFAAAPSLTRANALGQYLFVNGRPVRDKLIIGAVRAAYSDYLPRDRHPVVALFVTTAPQEVDANVHPAKTEVRFRNAGLVRALIVHALKEGLAREGRRTAANSDGAVLTAFRPAAVPRPANWDWRQSPASPVGAGPWSGGATAAAFAAPGQTAFDVGAPSADVRSDPNPVADLIDRPLGAARTQIHETYIVTQTRDGLIVVDQHAAHERIVYEKLKAALERDGVQRQILLIPDIVELDEATVEKLIDRAPELEKFGLAIESFGPGAVAVRETPSLLGKTNAAALLRDLAEHMAEWDEALPLERRLMHVAATMACHGSVRAGRILKPEEMNALLREMEDTPNSGQCNHGRPTYVELKLADIEKLFGRR.

The protein belongs to the DNA mismatch repair MutL/HexB family.

Functionally, this protein is involved in the repair of mismatches in DNA. It is required for dam-dependent methyl-directed DNA mismatch repair. May act as a 'molecular matchmaker', a protein that promotes the formation of a stable complex between two or more DNA-binding proteins in an ATP-dependent manner without itself being part of a final effector complex. This chain is DNA mismatch repair protein MutL, found in Nitrobacter hamburgensis (strain DSM 10229 / NCIMB 13809 / X14).